A 232-amino-acid chain; its full sequence is Ribose-5-phosphate isomerase A (232 aa).

Substrate is bound by residues 28 to 31 (TGST), 83 to 86 (DGAD), and 96 to 99 (KGGG). E105 (proton acceptor) is an active-site residue. Substrate is bound at residue K123.

It belongs to the ribose 5-phosphate isomerase family. Homodimer.

It catalyses the reaction aldehydo-D-ribose 5-phosphate = D-ribulose 5-phosphate. Its pathway is carbohydrate degradation; pentose phosphate pathway; D-ribose 5-phosphate from D-ribulose 5-phosphate (non-oxidative stage): step 1/1. Its function is as follows. Catalyzes the reversible conversion of ribose-5-phosphate to ribulose 5-phosphate. The protein is Ribose-5-phosphate isomerase A of Allorhizobium ampelinum (strain ATCC BAA-846 / DSM 112012 / S4) (Agrobacterium vitis (strain S4)).